A 226-amino-acid polypeptide reads, in one-letter code: V-type proton ATPase subunit E 2 (226 aa).

It belongs to the V-ATPase E subunit family. As to quaternary structure, V-ATPase is a heteromultimeric enzyme made up of two complexes: the ATP-hydrolytic V1 complex and the proton translocation V0 complex. The V1 complex consists of three catalytic AB heterodimers that form a heterohexamer, three peripheral stalks each consisting of EG heterodimers, one central rotor including subunits D and F, and the regulatory subunits C and H. The proton translocation complex V0 consists of the proton transport subunit a, a ring of proteolipid subunits c9c'', rotary subunit d, subunits e and f, and the accessory subunits ATP6AP1/Ac45 and ATP6AP2/PRR. As to expression, testis specific.

Its function is as follows. Subunit of the V1 complex of vacuolar(H+)-ATPase (V-ATPase), a multisubunit enzyme composed of a peripheral complex (V1) that hydrolyzes ATP and a membrane integral complex (V0) that translocates protons. V-ATPase is responsible for acidifying and maintaining the pH of intracellular compartments and in some cell types, is targeted to the plasma membrane, where it is responsible for acidifying the extracellular environment. The protein is V-type proton ATPase subunit E 2 (Atp6v1e2) of Mus musculus (Mouse).